Reading from the N-terminus, the 94-residue chain is CRISPR-associated endoribonuclease Cas2 1 (94 aa).

Asp-8 provides a ligand contact to Mg(2+).

Belongs to the CRISPR-associated endoribonuclease Cas2 protein family. In terms of assembly, homodimer, forms a heterotetramer with a Cas1 homodimer. Requires Mg(2+) as cofactor.

Its function is as follows. CRISPR (clustered regularly interspaced short palindromic repeat), is an adaptive immune system that provides protection against mobile genetic elements (viruses, transposable elements and conjugative plasmids). CRISPR clusters contain sequences complementary to antecedent mobile elements and target invading nucleic acids. CRISPR clusters are transcribed and processed into CRISPR RNA (crRNA). Functions as a ssRNA-specific endoribonuclease. Involved in the integration of spacer DNA into the CRISPR cassette. The protein is CRISPR-associated endoribonuclease Cas2 1 of Synechocystis sp. (strain ATCC 27184 / PCC 6803 / Kazusa).